The following is a 260-amino-acid chain: Proteasome assembly chaperone 2 (260 aa).

Belongs to the PSMG2 family. Forms a heterodimer with psmg1. Post-translationally, degraded by the proteasome upon completion of 20S proteasome maturation.

Its subcellular location is the nucleus. Chaperone protein which promotes assembly of the 20S proteasome as part of a heterodimer with psmg1. This Danio rerio (Zebrafish) protein is Proteasome assembly chaperone 2.